A 238-amino-acid chain; its full sequence is Large ribosomal subunit protein uL1 (238 aa).

This sequence belongs to the universal ribosomal protein uL1 family. In terms of assembly, part of the 50S ribosomal subunit.

In terms of biological role, binds directly to 23S rRNA. The L1 stalk is quite mobile in the ribosome, and is involved in E site tRNA release. Functionally, protein L1 is also a translational repressor protein, it controls the translation of the L11 operon by binding to its mRNA. The sequence is that of Large ribosomal subunit protein uL1 from Beutenbergia cavernae (strain ATCC BAA-8 / DSM 12333 / CCUG 43141 / JCM 11478 / NBRC 16432 / NCIMB 13614 / HKI 0122).